We begin with the raw amino-acid sequence, 190 residues long: Protein GrpE (190 aa).

The disordered stretch occupies residues 1-41 (MAKEKQEEQQKQTAPENEKAPKKDIKKEASDKKGDQTSKLK).

Belongs to the GrpE family. As to quaternary structure, homodimer.

The protein localises to the cytoplasm. Participates actively in the response to hyperosmotic and heat shock by preventing the aggregation of stress-denatured proteins, in association with DnaK and GrpE. It is the nucleotide exchange factor for DnaK and may function as a thermosensor. Unfolded proteins bind initially to DnaJ; upon interaction with the DnaJ-bound protein, DnaK hydrolyzes its bound ATP, resulting in the formation of a stable complex. GrpE releases ADP from DnaK; ATP binding to DnaK triggers the release of the substrate protein, thus completing the reaction cycle. Several rounds of ATP-dependent interactions between DnaJ, DnaK and GrpE are required for fully efficient folding. This is Protein GrpE from Limosilactobacillus reuteri (strain DSM 20016) (Lactobacillus reuteri).